We begin with the raw amino-acid sequence, 316 residues long: MFVLNKFFTNSHYKKIVPVVLLSCATLIGCSNSNTQSESNKQTNQTNQVKQENKRNHAFAKLEKEYNAKLGIYALDTSTNQTVAYHADDRFAFASTSKSLAVGALLRQNSIEALDERITYTRKDLSNYNPITEKHVDTGMTLKELADASVRYSDSTAHNLILKKLGGPSAFEKILREMGDTVTNSERFEPELNEVNPGETHDTSTPKAIAKTLQSFTLGTVLPSEKRELLVDWMKRNTTGDKLIRAGVPKGWEVADKTGAGSYGTRNDIAIIWPPNKKPIVLSILSNHDKEDAEYDDTLIADATKIVLETLKVTNK.

A signal peptide spans 1-29 (MFVLNKFFTNSHYKKIVPVVLLSCATLIG). Residue Cys-30 is the site of N-palmitoyl cysteine attachment. The S-diacylglycerol cysteine moiety is linked to residue Cys-30. A disordered region spans residues 34 to 53 (NTQSESNKQTNQTNQVKQEN). The span at 40 to 50 (NKQTNQTNQVK) shows a compositional bias: low complexity. Ser-95 serves as the catalytic Acyl-ester intermediate. The Proton acceptor role is filled by Glu-191. Residue 257 to 259 (KTG) participates in substrate binding.

Belongs to the class-A beta-lactamase family.

The protein localises to the cell membrane. It carries out the reaction a beta-lactam + H2O = a substituted beta-amino acid. This is Beta-lactamase 3 (blaZ) from Bacillus cereus.